We begin with the raw amino-acid sequence, 460 residues long: Tubby-related protein 3 (460 aa).

2 disordered regions span residues K37–P132 and Y151–A193. The span at Y151–G162 shows a compositional bias: acidic residues. Over residues S166–A188 the composition is skewed to low complexity.

The protein belongs to the TUB family. As to quaternary structure, associates with the IFT complex A (IFT-A). Interacts with SIRT1. As to expression, widely expressed including eyes and adipose depots.

It is found in the nucleus. The protein resides in the cell membrane. The protein localises to the cell projection. It localises to the cilium. Its subcellular location is the cytoplasm. It is found in the secreted. Its function is as follows. Negative regulator of the Shh signaling transduction pathway: recruited to primary cilia via association with the IFT complex A (IFT-A) and is required for recruitment of G protein-coupled receptor GPR161 to cilia, a promoter of PKA-dependent basal repression machinery in Shh signaling. Binds to phosphorylated inositide (phosphoinositide) lipids. Both IFT-A- and phosphoinositide-binding properties are required to regulate ciliary G protein-coupled receptor trafficking. During adipogenesis, regulates ciliary trafficking of FFAR4 in preadipocytes. The chain is Tubby-related protein 3 from Mus musculus (Mouse).